A 1828-amino-acid chain; its full sequence is AT-rich interactive domain-containing protein 2 (1828 aa).

Position 2 is an N-acetylalanine (A2). Residue S4 is modified to Phosphoserine. Glycyl lysine isopeptide (Lys-Gly) (interchain with G-Cter in SUMO2) cross-links involve residues K7, K15, and K119. Residues 13 to 105 (RRKGLAFLDE…YLEKYEKVHH (93 aa)) enclose the ARID domain. Residues 313–317 (LRFLL) carry the LXXLL motif. The RFX-type winged-helix DNA-binding region spans 524–603 (ACQWLNAHFE…IHVIGVKRRA (80 aa)). A Glycyl lysine isopeptide (Lys-Gly) (interchain with G-Cter in SUMO2) cross-link involves residue K555. Residues S631 and S635 each carry the phosphoserine modification. T653 carries the post-translational modification Phosphothreonine. Residue S689 is modified to Phosphoserine. T692 carries the phosphothreonine modification. Disordered stretches follow at residues 824–843 (TSPQPMHTSSQQTAAGSQPQ), 962–1028 (LTGQ…QVQV), 1245–1339 (KEAT…EPVD), 1360–1462 (KGDG…RPSV), 1483–1503 (HSGPRVTPSALSSDARSTNGT), and 1566–1618 (SAAQ…HADP). Residues 987–1011 (AMSSSSTLQSQGPPPTVSQMLSVKR) are compositionally biased toward polar residues. The segment covering 1012–1028 (QQQQQHSPAAPAQQVQV) has biased composition (low complexity). Residues 1245-1259 (KEATGLHVHERKIEV) are compositionally biased toward basic and acidic residues. Polar residues predominate over residues 1267–1283 (RGTTNTSNGDTSESELQ). The residue at position 1294 (S1294) is a Phosphoserine. Composition is skewed to polar residues over residues 1295-1320 (DSSLPPSNSGKLQSETSQCSLISNGP) and 1366-1379 (LSKNIPNHKTSNHV). Phosphoserine is present on S1385. Composition is skewed to polar residues over residues 1390–1400 (QGTSGATQQDT) and 1419–1428 (GSPSTSSMQE). Low complexity predominate over residues 1453–1462 (SDVPQQRPSV). S1491 carries the phosphoserine modification. Polar residues-rich tracts occupy residues 1491–1503 (SALSSDARSTNGT) and 1567–1586 (AAQQKQQHPPTYMQSVAPQN). Positions 1594–1614 (AVQVQGQPSSSQPSPVSASSQ) are enriched in low complexity. Residues 1626–1651 (FMCLWQSCKKWFQTPSQVFYHAATEH) form a C2H2-type zinc finger. Residues K1695, K1710, and K1725 each participate in a glycyl lysine isopeptide (Lys-Gly) (interchain with G-Cter in SUMO2) cross-link. Residues 1697-1726 (DEPGQVANQKSSTKQPTVGGTGSAPRAQKA) form a disordered region. A compositionally biased stretch (polar residues) spans 1702–1714 (VANQKSSTKQPTV).

The protein belongs to the RFX family. As to quaternary structure, component of the SWI/SNF-B (PBAF) chromatin remodeling complex, at least composed of SMARCA4/BRG1, SMARCB1/BAF47/SNF5, ACTL6A/BAF53A or ACTL6B/BAF53B, SMARCE1/BAF57, SMARCD1/BAF60A, SMARCD2/BAF60B, perhaps SMARCD3/BAF60C, SMARCC1/BAF155, SMARCC2/BAF170, PBRM1/BAF180, ARID2/BAF200 and actin. Interacts with SRF. Forms complexes with SRF and SRF cofactors MYOCD, NKX2-5 and SRFBP1. Highly expressed in testis, expressed in heart, liver and kidney.

It localises to the nucleus. Functionally, involved in transcriptional activation and repression of select genes by chromatin remodeling (alteration of DNA-nucleosome topology). Required for the stability of the SWI/SNF chromatin remodeling complex SWI/SNF-B (PBAF). May be involved in targeting the complex to different genes. May be involved in regulating transcriptional activation of cardiac genes. The chain is AT-rich interactive domain-containing protein 2 from Mus musculus (Mouse).